A 168-amino-acid polypeptide reads, in one-letter code: G/U mismatch-specific DNA glycosylase (168 aa).

The protein belongs to the uracil-DNA glycosylase (UDG) superfamily. TDG/mug family. As to quaternary structure, binds DNA as a monomer.

The protein resides in the cytoplasm. The catalysed reaction is Specifically hydrolyzes mismatched double-stranded DNA and polynucleotides, releasing free uracil.. Its function is as follows. Excises ethenocytosine and uracil, which can arise by alkylation or deamination of cytosine, respectively, from the corresponding mispairs with guanine in ds-DNA. It is capable of hydrolyzing the carbon-nitrogen bond between the sugar-phosphate backbone of the DNA and the mispaired base. The complementary strand guanine functions in substrate recognition. Required for DNA damage lesion repair in stationary-phase cells. The sequence is that of G/U mismatch-specific DNA glycosylase from Salmonella paratyphi B (strain ATCC BAA-1250 / SPB7).